The sequence spans 444 residues: Tubulin beta chain (444 aa).

GTP is bound by residues Gln-11, Glu-68, Ser-137, Gly-141, Thr-142, Gly-143, Asn-203, and Asn-225. Glu-68 is a binding site for Mg(2+). The segment at 424–444 (QDATAEEEGEFDEDEEMDEMM) is disordered. A compositionally biased stretch (acidic residues) spans 427–444 (TAEEEGEFDEDEEMDEMM).

This sequence belongs to the tubulin family. In terms of assembly, dimer of alpha and beta chains. A typical microtubule is a hollow water-filled tube with an outer diameter of 25 nm and an inner diameter of 15 nM. Alpha-beta heterodimers associate head-to-tail to form protofilaments running lengthwise along the microtubule wall with the beta-tubulin subunit facing the microtubule plus end conferring a structural polarity. Microtubules usually have 13 protofilaments but different protofilament numbers can be found in some organisms and specialized cells. Mg(2+) serves as cofactor.

It localises to the cytoplasm. The protein localises to the cytoskeleton. Tubulin is the major constituent of microtubules, a cylinder consisting of laterally associated linear protofilaments composed of alpha- and beta-tubulin heterodimers. Microtubules grow by the addition of GTP-tubulin dimers to the microtubule end, where a stabilizing cap forms. Below the cap, tubulin dimers are in GDP-bound state, owing to GTPase activity of alpha-tubulin. The polypeptide is Tubulin beta chain (Achlya klebsiana).